An 872-amino-acid chain; its full sequence is Leucine--tRNA ligase (872 aa).

Residues 56–66 (PYPSGNLHMGH) carry the 'HIGH' region motif. Positions 629–633 (KMSKS) match the 'KMSKS' region motif. Lysine 632 serves as a coordination point for ATP.

The protein belongs to the class-I aminoacyl-tRNA synthetase family.

The protein resides in the cytoplasm. It carries out the reaction tRNA(Leu) + L-leucine + ATP = L-leucyl-tRNA(Leu) + AMP + diphosphate. The protein is Leucine--tRNA ligase of Prochlorococcus marinus (strain MIT 9211).